We begin with the raw amino-acid sequence, 399 residues long: Phosphoglycerate kinase (399 aa).

Substrate-binding positions include 22–24 (DFN), arginine 38, 61–64 (HLGR), arginine 120, and arginine 153. Residues lysine 204, glutamate 326, and 353-356 (GGDT) each bind ATP.

The protein belongs to the phosphoglycerate kinase family. Monomer.

It localises to the cytoplasm. It catalyses the reaction (2R)-3-phosphoglycerate + ATP = (2R)-3-phospho-glyceroyl phosphate + ADP. It participates in carbohydrate degradation; glycolysis; pyruvate from D-glyceraldehyde 3-phosphate: step 2/5. The protein is Phosphoglycerate kinase of Geotalea daltonii (strain DSM 22248 / JCM 15807 / FRC-32) (Geobacter daltonii).